A 147-amino-acid chain; its full sequence is 3-dehydroquinate dehydratase (147 aa).

Tyr23 functions as the Proton acceptor in the catalytic mechanism. Positions 74, 80, and 87 each coordinate substrate. The active-site Proton donor is the His100. Substrate-binding positions include 101-102 (IS) and Arg111.

Belongs to the type-II 3-dehydroquinase family. In terms of assembly, homododecamer.

The catalysed reaction is 3-dehydroquinate = 3-dehydroshikimate + H2O. Its pathway is metabolic intermediate biosynthesis; chorismate biosynthesis; chorismate from D-erythrose 4-phosphate and phosphoenolpyruvate: step 3/7. Catalyzes a trans-dehydration via an enolate intermediate. The chain is 3-dehydroquinate dehydratase from Prochlorococcus marinus (strain MIT 9301).